Here is a 303-residue protein sequence, read N- to C-terminus: Glycosyltransferase AglJ (303 aa).

Transmembrane regions (helical) follow at residues 230–250 (FYFGSVGFASTATGLGLALYV) and 263–283 (VIAVVSMAGILFGVQLLMFGV).

Belongs to the glycosyltransferase 2 family.

It localises to the cell membrane. The protein operates within cell surface structure biogenesis; S-layer biogenesis. In terms of biological role, involved in the assembly of a N-linked pentasaccharide that decorates the S-layer glycoprotein and flagellins. Adds the first hexose subunit of the pentasaccharide to the dolichol phosphate carrier. In Haloferax volcanii (strain ATCC 29605 / DSM 3757 / JCM 8879 / NBRC 14742 / NCIMB 2012 / VKM B-1768 / DS2) (Halobacterium volcanii), this protein is Glycosyltransferase AglJ (aglJ).